We begin with the raw amino-acid sequence, 415 residues long: Serine hydroxymethyltransferase (415 aa).

Residues Leu117 and 121-123 (GHL) each bind (6S)-5,6,7,8-tetrahydrofolate. N6-(pyridoxal phosphate)lysine is present on Lys226. (6S)-5,6,7,8-tetrahydrofolate-binding positions include Glu241 and 349–351 (SPF).

The protein belongs to the SHMT family. Homodimer. Requires pyridoxal 5'-phosphate as cofactor.

It localises to the cytoplasm. The catalysed reaction is (6R)-5,10-methylene-5,6,7,8-tetrahydrofolate + glycine + H2O = (6S)-5,6,7,8-tetrahydrofolate + L-serine. It participates in one-carbon metabolism; tetrahydrofolate interconversion. It functions in the pathway amino-acid biosynthesis; glycine biosynthesis; glycine from L-serine: step 1/1. Its function is as follows. Catalyzes the reversible interconversion of serine and glycine with tetrahydrofolate (THF) serving as the one-carbon carrier. This reaction serves as the major source of one-carbon groups required for the biosynthesis of purines, thymidylate, methionine, and other important biomolecules. Also exhibits THF-independent aldolase activity toward beta-hydroxyamino acids, producing glycine and aldehydes, via a retro-aldol mechanism. The polypeptide is Serine hydroxymethyltransferase (Geotalea uraniireducens (strain Rf4) (Geobacter uraniireducens)).